The chain runs to 298 residues: tRNA-cytidine(32) 2-sulfurtransferase (298 aa).

Residues 48–53 (SGGKDS) carry the PP-loop motif motif. [4Fe-4S] cluster-binding residues include Cys-123, Cys-126, and Cys-214.

It belongs to the TtcA family. Homodimer. Requires Mg(2+) as cofactor. [4Fe-4S] cluster serves as cofactor.

The protein resides in the cytoplasm. It carries out the reaction cytidine(32) in tRNA + S-sulfanyl-L-cysteinyl-[cysteine desulfurase] + AH2 + ATP = 2-thiocytidine(32) in tRNA + L-cysteinyl-[cysteine desulfurase] + A + AMP + diphosphate + H(+). It functions in the pathway tRNA modification. Its function is as follows. Catalyzes the ATP-dependent 2-thiolation of cytidine in position 32 of tRNA, to form 2-thiocytidine (s(2)C32). The sulfur atoms are provided by the cysteine/cysteine desulfurase (IscS) system. The chain is tRNA-cytidine(32) 2-sulfurtransferase from Nitrosospira multiformis (strain ATCC 25196 / NCIMB 11849 / C 71).